We begin with the raw amino-acid sequence, 368 residues long: UDP-N-acetylglucosamine--N-acetylmuramyl-(pentapeptide) pyrophosphoryl-undecaprenol N-acetylglucosamine transferase (368 aa).

UDP-N-acetyl-alpha-D-glucosamine contacts are provided by residues 14 to 16 (TGG), Asn-125, Arg-168, Ser-196, and Gln-297.

The protein belongs to the glycosyltransferase 28 family. MurG subfamily.

Its subcellular location is the cell inner membrane. It carries out the reaction di-trans,octa-cis-undecaprenyl diphospho-N-acetyl-alpha-D-muramoyl-L-alanyl-D-glutamyl-meso-2,6-diaminopimeloyl-D-alanyl-D-alanine + UDP-N-acetyl-alpha-D-glucosamine = di-trans,octa-cis-undecaprenyl diphospho-[N-acetyl-alpha-D-glucosaminyl-(1-&gt;4)]-N-acetyl-alpha-D-muramoyl-L-alanyl-D-glutamyl-meso-2,6-diaminopimeloyl-D-alanyl-D-alanine + UDP + H(+). Its pathway is cell wall biogenesis; peptidoglycan biosynthesis. Its function is as follows. Cell wall formation. Catalyzes the transfer of a GlcNAc subunit on undecaprenyl-pyrophosphoryl-MurNAc-pentapeptide (lipid intermediate I) to form undecaprenyl-pyrophosphoryl-MurNAc-(pentapeptide)GlcNAc (lipid intermediate II). The chain is UDP-N-acetylglucosamine--N-acetylmuramyl-(pentapeptide) pyrophosphoryl-undecaprenol N-acetylglucosamine transferase from Nitrobacter winogradskyi (strain ATCC 25391 / DSM 10237 / CIP 104748 / NCIMB 11846 / Nb-255).